The chain runs to 337 residues: 4-hydroxy-2-oxovalerate aldolase (337 aa).

The region spanning 6–256 (IRIMDTTLRD…ETGIDLFQIM (251 aa)) is the Pyruvate carboxyltransferase domain. 14 to 15 (RD) contacts substrate. Position 15 (D15) interacts with Mn(2+). H18 (proton acceptor) is an active-site residue. Substrate contacts are provided by S168 and H195. Mn(2+) contacts are provided by H195 and H197. Y286 is a binding site for substrate.

The protein belongs to the 4-hydroxy-2-oxovalerate aldolase family.

It catalyses the reaction (S)-4-hydroxy-2-oxopentanoate = acetaldehyde + pyruvate. The chain is 4-hydroxy-2-oxovalerate aldolase (nahM) from Geobacillus genomosp. 3.